We begin with the raw amino-acid sequence, 97 residues long: Cobalt transport protein CbiN (97 aa).

A run of 2 helical transmembrane segments spans residues 6–26 and 68–88; these read VLMI…YSGL and SLLF…FFGY.

The protein belongs to the CbiN family. As to quaternary structure, forms an energy-coupling factor (ECF) transporter complex composed of an ATP-binding protein (A component, CbiO), a transmembrane protein (T component, CbiQ) and 2 possible substrate-capture proteins (S components, CbiM and CbiN) of unknown stoichimetry.

It localises to the cell membrane. Its pathway is cofactor biosynthesis; adenosylcobalamin biosynthesis. Its function is as follows. Part of the energy-coupling factor (ECF) transporter complex CbiMNOQ involved in cobalt import. This chain is Cobalt transport protein CbiN, found in Methanococcus maripaludis (strain C6 / ATCC BAA-1332).